Here is a 551-residue protein sequence, read N- to C-terminus: Chaperonin GroEL (551 aa).

ATP contacts are provided by residues Thr-30–Pro-33, Lys-51, Asp-87–Thr-91, Gly-415, Asn-479–Ala-481, and Asp-495. The segment at Asp-523 to Met-551 is disordered. Positions Gly-539–Met-551 are enriched in gly residues.

It belongs to the chaperonin (HSP60) family. In terms of assembly, forms a cylinder of 14 subunits composed of two heptameric rings stacked back-to-back. Interacts with the co-chaperonin GroES.

It is found in the cytoplasm. It carries out the reaction ATP + H2O + a folded polypeptide = ADP + phosphate + an unfolded polypeptide.. Its function is as follows. Together with its co-chaperonin GroES, plays an essential role in assisting protein folding. The GroEL-GroES system forms a nano-cage that allows encapsulation of the non-native substrate proteins and provides a physical environment optimized to promote and accelerate protein folding. The chain is Chaperonin GroEL from Buchnera aphidicola subsp. Chaetophorus leucomelas.